The following is a 60-amino-acid chain: Ferredoxin-1 (60 aa).

4Fe-4S ferredoxin-type domains lie at 2-27 (LYITEECTYCGACEPECPVTAISAGD) and 28-60 (DIYVIDANTCNECAGLDEQACVAVCPAECIVQG). Residues Cys8, Cys11, Cys14, Cys18, Cys37, Cys40, Cys48, and Cys52 each coordinate [4Fe-4S] cluster.

It depends on [4Fe-4S] cluster as a cofactor.

In terms of biological role, ferredoxins are iron-sulfur proteins that transfer electrons in a wide variety of metabolic reactions. The protein is Ferredoxin-1 of Chlorobium limicola.